Reading from the N-terminus, the 333-residue chain is Fatty acid hydroxylase domain-containing protein 2 (333 aa).

The next 6 helical transmembrane spans lie at phenylalanine 29 to leucine 49, isoleucine 77 to leucine 97, threonine 134 to leucine 154, phenylalanine 168 to tyrosine 188, valine 215 to valine 235, and proline 237 to isoleucine 257. One can recognise a Fatty acid hydroxylase domain in the interval alanine 176 to threonine 299.

Belongs to the sterol desaturase family.

Its subcellular location is the cytoplasm. It localises to the membrane. Functionally, promotes megakaryocyte differentiation by enhancing ERK phosphorylation and up-regulating RUNX1 expression. The polypeptide is Fatty acid hydroxylase domain-containing protein 2 (FAXDC2) (Macaca fascicularis (Crab-eating macaque)).